Here is a 198-residue protein sequence, read N- to C-terminus: Probable GTP-binding protein EngB (198 aa).

In terms of domain architecture, EngB-type G spans 22–195 (GHPEIAFLGR…WSWLEQTAGL (174 aa)). Residues 30 to 37 (GRSNVGKS), 57 to 61 (GKTQT), 75 to 78 (DVPG), 142 to 145 (TKID), and 174 to 176 (FSA) each bind GTP. Mg(2+) is bound by residues serine 37 and threonine 59.

It belongs to the TRAFAC class TrmE-Era-EngA-EngB-Septin-like GTPase superfamily. EngB GTPase family. Mg(2+) is required as a cofactor.

In terms of biological role, necessary for normal cell division and for the maintenance of normal septation. The polypeptide is Probable GTP-binding protein EngB (Lacticaseibacillus paracasei (strain ATCC 334 / BCRC 17002 / CCUG 31169 / CIP 107868 / KCTC 3260 / NRRL B-441) (Lactobacillus paracasei)).